Here is a 663-residue protein sequence, read N- to C-terminus: MKHLVTTALAYTNGPLHLGHARSTYIPADIYTRYLRLKGEEVVHVGGTDNHGVPITLTAEREGVKPIDIVDRYHNAIKADLDSLNVSFDTFGRTHSDIHIETAQEFYSKLKENGYIYEKEIEQFYCEKCDMYLADRYVEGICPFCEGEARGDHCEVCGRHLEPTELVNPYCIHCNSKPEIKRTTHYFFKLSAMQDVLKEYIENSPEMPEHVKNMALRWIEELHDWDVSRNIKWGVPIPGCDDQVMYVWIEAPIGYVSFTKQLGGIWEDYWLENTGDSKISHFIGKDITVHHAVFWPGILKGIGGYKMPNAVVSGGYLTLENKKMSTSKNWVVWVKDFIENFSSDYLRYFFMINAPLNRDTDFSWDDFQKRINTELIDIIGNFTHRTLVFTERKFGSTPIVDSNQLIDEDKKLISKCESTLNRVDSLIREYNFKDALMEIILLAKEGNAYFQGMAPWAIKDDERLKEVMYTCSVALKYIIYLLSSFMPEKTALLLEYMNEELDLEVRGNPLKKPKVIFTKVSDEDISRMKENLLAATKKAETKTDEKSKKVKSGEKMDIIDIDYFGNVDLRVGQILEVEEVPRSKKLYKIIADLGDEKRQIVSGLKGAYEAEELVGKKVIIICNLKPAKLCGVESQGMLLAAEDDSIVSLLALDRDLPVGSKIH.

The 'HIGH' region motif lies at 10–20 (AYTNGPLHLGH). The Zn(2+) site is built by Cys-142, Cys-145, Cys-154, and Cys-157. The 'KMSKS' region motif lies at 323-327 (KMSTS). Thr-326 contributes to the ATP binding site. Residues 563-663 (YFGNVDLRVG…RDLPVGSKIH (101 aa)) enclose the tRNA-binding domain.

Belongs to the class-I aminoacyl-tRNA synthetase family. MetG type 1 subfamily. In terms of assembly, homodimer. Zn(2+) is required as a cofactor.

The protein resides in the cytoplasm. The catalysed reaction is tRNA(Met) + L-methionine + ATP = L-methionyl-tRNA(Met) + AMP + diphosphate. In terms of biological role, is required not only for elongation of protein synthesis but also for the initiation of all mRNA translation through initiator tRNA(fMet) aminoacylation. The protein is Methionine--tRNA ligase of Methanococcus maripaludis (strain C7 / ATCC BAA-1331).